We begin with the raw amino-acid sequence, 152 residues long: TOMM20-like protein 1 (152 aa).

Residues 1-9 lie on the Mitochondrial intermembrane side of the membrane; the sequence is MPSVRSLLR. The chain crosses the membrane as a helical span at residues 10-29; it reads LLAAAAACGAFAFLGYCIYL. Residues 30–152 are Cytoplasmic-facing; that stretch reads NRKRRGDPAF…EQDCLEDDPD (123 aa). The interval 43–62 is disordered; sequence LRDKRRAEPQKAEEQGTQLW. A compositionally biased stretch (basic and acidic residues) spans 47–56; the sequence is RRAEPQKAEE.

This sequence belongs to the Tom20 family.

It localises to the mitochondrion outer membrane. In Homo sapiens (Human), this protein is TOMM20-like protein 1 (TOMM20L).